Consider the following 68-residue polypeptide: Large ribosomal subunit protein bL32 (68 aa).

A disordered region spans residues 1–20 (MAVQQNKVSKSRRNNRRAHD).

This sequence belongs to the bacterial ribosomal protein bL32 family.

In Ruegeria sp. (strain TM1040) (Silicibacter sp.), this protein is Large ribosomal subunit protein bL32.